The sequence spans 205 residues: Thiamine-phosphate synthase (205 aa).

Residues 37-41 (QVREK) and asparagine 69 contribute to the 4-amino-2-methyl-5-(diphosphooxymethyl)pyrimidine site. Residues aspartate 70 and aspartate 89 each coordinate Mg(2+). Serine 108 contacts 4-amino-2-methyl-5-(diphosphooxymethyl)pyrimidine. 134-136 (TGS) is a 2-[(2R,5Z)-2-carboxy-4-methylthiazol-5(2H)-ylidene]ethyl phosphate binding site. Lysine 137 lines the 4-amino-2-methyl-5-(diphosphooxymethyl)pyrimidine pocket. 2-[(2R,5Z)-2-carboxy-4-methylthiazol-5(2H)-ylidene]ethyl phosphate is bound by residues glycine 165 and 185-186 (IS).

Belongs to the thiamine-phosphate synthase family. Mg(2+) is required as a cofactor.

It carries out the reaction 2-[(2R,5Z)-2-carboxy-4-methylthiazol-5(2H)-ylidene]ethyl phosphate + 4-amino-2-methyl-5-(diphosphooxymethyl)pyrimidine + 2 H(+) = thiamine phosphate + CO2 + diphosphate. It catalyses the reaction 2-(2-carboxy-4-methylthiazol-5-yl)ethyl phosphate + 4-amino-2-methyl-5-(diphosphooxymethyl)pyrimidine + 2 H(+) = thiamine phosphate + CO2 + diphosphate. The catalysed reaction is 4-methyl-5-(2-phosphooxyethyl)-thiazole + 4-amino-2-methyl-5-(diphosphooxymethyl)pyrimidine + H(+) = thiamine phosphate + diphosphate. It functions in the pathway cofactor biosynthesis; thiamine diphosphate biosynthesis; thiamine phosphate from 4-amino-2-methyl-5-diphosphomethylpyrimidine and 4-methyl-5-(2-phosphoethyl)-thiazole: step 1/1. Condenses 4-methyl-5-(beta-hydroxyethyl)thiazole monophosphate (THZ-P) and 2-methyl-4-amino-5-hydroxymethyl pyrimidine pyrophosphate (HMP-PP) to form thiamine monophosphate (TMP). This chain is Thiamine-phosphate synthase, found in Clostridium botulinum (strain ATCC 19397 / Type A).